A 307-amino-acid chain; its full sequence is Trehalose transport system permease protein SugA (307 aa).

Transmembrane regions (helical) follow at residues 25 to 45, 89 to 109, 123 to 143, 168 to 188, 217 to 237, and 272 to 292; these read LAFMLVAPAAMLMVAVTAYPI, LAITAVSVTIEFVLGLALALV, AVLIPYGIVTVVASYSWYYAW, LGIVVIAEVWKTTPFMSLLLL, ILPMIKPAIVVALLFRTLDAF, and LGSAISVLIFGCVAVIAFIFI. In terms of domain architecture, ABC transmembrane type-1 spans 85–291; that stretch reads LAVTLAITAV…GCVAVIAFIF (207 aa).

It belongs to the binding-protein-dependent transport system permease family. The complex is composed of two ATP-binding proteins (SugC), two transmembrane proteins (Suga and SugB) and a solute-binding protein (LpqY).

The protein localises to the cell inner membrane. In terms of biological role, part of the ABC transporter complex LpqY-SugA-SugB-SugC, which is highly specific for uptake of trehalose. Involved in the recycling of extracellular trehalose released from trehalose-containing molecules synthesized by M.tuberculosis. Trehalose uptake is essential for virulence. Probably responsible for the translocation of the substrate across the membrane. The protein is Trehalose transport system permease protein SugA (sugA) of Mycobacterium tuberculosis (strain CDC 1551 / Oshkosh).